The primary structure comprises 390 residues: Putative gustatory receptor 36c (390 aa).

The Cytoplasmic portion of the chain corresponds to 1 to 4; it reads MDLE. Residues 5-25 traverse the membrane as a helical segment; the sequence is SFLLGAVYYYGLFIGLSNFEF. At 26-36 the chain is on the extracellular side; the sequence is DWNTGRVFTKK. Residues 37-57 traverse the membrane as a helical segment; sequence WSTLYAIALDSCIFALYIYHW. The Cytoplasmic portion of the chain corresponds to 58-75; sequence TGNTNIVNAIFGRANMLH. Residues 76–96 form a helical membrane-spanning segment; the sequence is EYVVAILTGLRIVTGLFTLIL. At 97–132 the chain is on the extracellular side; that stretch reads RWYQRCKMMDLASKVVRMYVARPQVRRMSRWGILTK. The helical transmembrane segment at 133 to 153 threads the bilayer; that stretch reads FIFGSITDGLQMAMVLSAMGS. Over 154–165 the chain is Cytoplasmic; the sequence is VDSQFYLGLGLQ. A helical membrane pass occupies residues 166 to 186; the sequence is YWMFVILNMAMMQQHMIMLFV. Over 187 to 254 the chain is Extracellular; sequence RTQFQLINTE…MEEVFGIQGA (68 aa). Residues 255–275 traverse the membrane as a helical segment; sequence MTYGGYYLSSVGTCYLAYSIL. The Cytoplasmic portion of the chain corresponds to 276 to 288; that stretch reads KHGYENLSMTLST. Residues 289-309 form a helical membrane-spanning segment; sequence VILAYSWCFFYYLDGMLNLSV. Residues 310–390 lie on the Extracellular side of the membrane; that stretch reads MLHVQDDYWE…FLIQYDIEHF (81 aa).

Belongs to the insect chemoreceptor superfamily. Gustatory receptor (GR) family. Gr22e subfamily. As to expression, expressed in neurons of the terminal external chemosensory organ of larvae.

The protein resides in the cell membrane. Probable gustatory receptor which mediates acceptance or avoidance behavior, depending on its substrates. This is Putative gustatory receptor 36c (Gr36c) from Drosophila melanogaster (Fruit fly).